Reading from the N-terminus, the 518-residue chain is Vesicular inhibitory amino acid transporter (518 aa).

Residues 1–125 (MATLIRSKLS…WNVTNAIQGM (125 aa)) are Cytoplasmic-facing. Residues 66-98 (EVPSGDPTAEGDSHYQRDGTGPPSSASKDEGLC) are disordered. A helical transmembrane segment spans residues 126–146 (FVLGLPYAILHGGYLGLFLII). Residues 147–197 (FAAVVCCYTGKILIACLYEENEDGETVRVRDSYVDIANACCAPRFPKLGGR) are Lumenal, vesicle-facing. The chain crosses the membrane as a helical span at residues 198-218 (VVNVAQIIELVMTCILYVVVS). The Cytoplasmic portion of the chain corresponds to 219 to 258 (GNLMYNSFPSLPISQKSWSIIATAMLLPCAFLKNLKAVSK). A helical transmembrane segment spans residues 259–279 (FSLLCTLAHFVINVLVIAYCL). Residues 280 to 298 (SRARDWAWDKVKFYIDVKK) lie on the Lumenal, vesicle side of the membrane. Residues 299–319 (FPISIGIIVFSYTSQIFLPSL) traverse the membrane as a helical segment. At 320-334 (EGNMQSPKEFHCMMN) the chain is on the cytoplasmic side. A helical membrane pass occupies residues 335-355 (WTHIAACILKGLFALVAYLTW). The Lumenal, vesicle segment spans residues 356–376 (ADETKEVITDNLPSTIRAVVN). Residues 377–397 (LFLVAKALLSYPLPFFAAVEV) form a helical membrane-spanning segment. Residues 398–431 (LEKSLFQEGARAFFPNCYGGDGRLKSWGLTLRCA) lie on the Cytoplasmic side of the membrane. A helical transmembrane segment spans residues 432–452 (LVVFTLLMAIYVPHFALLMGL). Residues 453-454 (TG) are Lumenal, vesicle-facing. Residues 455 to 475 (SLTGAGLCFLLPSLFHLKLLW) traverse the membrane as a helical segment. Topologically, residues 476–482 (RKLQWHQ) are cytoplasmic. The chain crosses the membrane as a helical span at residues 483-503 (VFFDVSIFVIGSICSVSGFVH). Over 504–518 (SLEGLIEAFRFNIED) the chain is Lumenal, vesicle.

It belongs to the amino acid/polyamine transporter 2 family.

The protein resides in the cytoplasmic vesicle membrane. Its subcellular location is the presynapse. It carries out the reaction 4-aminobutanoate(out) + n H(+)(in) = 4-aminobutanoate(in) + n H(+)(out). It catalyses the reaction glycine(out) + n H(+)(in) = glycine(in) + n H(+)(out). The enzyme catalyses beta-alanine(out) + n H(+)(in) = beta-alanine(in) + n H(+)(out). Its function is as follows. Antiporter that exchanges vesicular protons for cytosolic 4-aminobutanoate or to a lesser extend glycine, thus allowing their secretion from nerve terminals. The transport is equally dependent on the chemical and electrical components of the proton gradient. May also transport beta-alanine. Acidification of GABAergic synaptic vesicles is a prerequisite for 4-aminobutanoate uptake. This is Vesicular inhibitory amino acid transporter from Xenopus tropicalis (Western clawed frog).